We begin with the raw amino-acid sequence, 181 residues long: ATP synthase subunit delta (181 aa).

The protein belongs to the ATPase delta chain family. In terms of assembly, F-type ATPases have 2 components, F(1) - the catalytic core - and F(0) - the membrane proton channel. F(1) has five subunits: alpha(3), beta(3), gamma(1), delta(1), epsilon(1). F(0) has three main subunits: a(1), b(2) and c(10-14). The alpha and beta chains form an alternating ring which encloses part of the gamma chain. F(1) is attached to F(0) by a central stalk formed by the gamma and epsilon chains, while a peripheral stalk is formed by the delta and b chains.

It is found in the cell inner membrane. Functionally, f(1)F(0) ATP synthase produces ATP from ADP in the presence of a proton or sodium gradient. F-type ATPases consist of two structural domains, F(1) containing the extramembraneous catalytic core and F(0) containing the membrane proton channel, linked together by a central stalk and a peripheral stalk. During catalysis, ATP synthesis in the catalytic domain of F(1) is coupled via a rotary mechanism of the central stalk subunits to proton translocation. In terms of biological role, this protein is part of the stalk that links CF(0) to CF(1). It either transmits conformational changes from CF(0) to CF(1) or is implicated in proton conduction. The protein is ATP synthase subunit delta of Fervidobacterium nodosum (strain ATCC 35602 / DSM 5306 / Rt17-B1).